Reading from the N-terminus, the 126-residue chain is Large ribosomal subunit protein bL20c (126 aa).

Belongs to the bacterial ribosomal protein bL20 family.

Its subcellular location is the plastid. It localises to the chloroplast. Its function is as follows. Binds directly to 23S ribosomal RNA and is necessary for the in vitro assembly process of the 50S ribosomal subunit. It is not involved in the protein synthesizing functions of that subunit. This Lactuca sativa (Garden lettuce) protein is Large ribosomal subunit protein bL20c.